The chain runs to 368 residues: Quinolinate synthase (368 aa).

Positions 46 and 63 each coordinate iminosuccinate. Cysteine 110 is a binding site for [4Fe-4S] cluster. Iminosuccinate is bound by residues 141–143 and serine 162; that span reads YVN. A [4Fe-4S] cluster-binding site is contributed by cysteine 230. Iminosuccinate contacts are provided by residues 256 to 258 and threonine 273; that span reads HPE. Cysteine 320 is a [4Fe-4S] cluster binding site.

It belongs to the quinolinate synthase family. Type 3 subfamily. [4Fe-4S] cluster is required as a cofactor.

It localises to the cytoplasm. It catalyses the reaction iminosuccinate + dihydroxyacetone phosphate = quinolinate + phosphate + 2 H2O + H(+). It functions in the pathway cofactor biosynthesis; NAD(+) biosynthesis; quinolinate from iminoaspartate: step 1/1. Its function is as follows. Catalyzes the condensation of iminoaspartate with dihydroxyacetone phosphate to form quinolinate. This chain is Quinolinate synthase, found in Bacillus cereus (strain B4264).